Reading from the N-terminus, the 518-residue chain is Retinal dehydrogenase 2 (518 aa).

Phosphotyrosine is present on Y168. NAD(+)-binding positions include 184 to 186 (IPW), 210 to 213 (KPAE), and 264 to 266 (STE). The Proton acceptor role is filled by E286. C320 acts as the Nucleophile in catalysis. Phosphoserine is present on S351. NAD(+)-binding positions include 366-370 (KQYNK) and E417.

Belongs to the aldehyde dehydrogenase family. In terms of assembly, homotetramer. In terms of tissue distribution, found in testis and less abundantly in lung, brain, heart, liver and kidney.

It localises to the cytoplasm. The enzyme catalyses retinal + NAD(+) + H2O = retinoate + NADH + 2 H(+). It carries out the reaction all-trans-retinal + NAD(+) + H2O = all-trans-retinoate + NADH + 2 H(+). The catalysed reaction is all-trans-13,14-dihydroretinal + NAD(+) + H2O = all-trans-13,14-dihydroretinoate + NADH + 2 H(+). The protein operates within cofactor metabolism; retinol metabolism. In terms of biological role, catalyzes the NAD-dependent oxidation of aldehyde substrates, such as all-trans-retinal and all-trans-13,14-dihydroretinal, to their corresponding carboxylic acids, all-trans-retinoate and all-trans-13,14-dihydroretinoate, respectively. Retinoate signaling is critical for the transcriptional control of many genes, for instance it is crucial for initiation of meiosis in both male and female. Recognizes retinal as substrate, both in its free form and when bound to cellular retinol-binding protein. Lacks activity with benzaldehyde, acetaldehyde and octanal. Displays complete lack of activity with citral. The polypeptide is Retinal dehydrogenase 2 (Aldh1a2) (Rattus norvegicus (Rat)).